Reading from the N-terminus, the 621-residue chain is MEFTIAEELAKNQKSISVAEFFEKNRQILGFDSAPRSLITTVKEAVDNALDACEEAGILPDILVQIERTGQDYVTVIIEDNGPGIIKEQIPKVFAKLLYGSRFHALKQSRGQQGIGISAAVLYAQMTAGKQTKILSKTGSGNPAHYYELMINTSTNEPDILKDEIRDWFRPHGTQIELEMKAAYVKGRRQSISEYLKATAIVNPHARITLIEPDGNEEVFERATDKMPKPAEEILPHPEGIELGTLMKMLHYTERQKLAPFLRYSFCKIGLLTAEEICKASGLDPEIDPHALGRHEARKLIEAFEKVKIMSPPTDCLSPIGEELIYRGLEKETNVDFIATSTRKPAVYSGNPFVVEVGLAYGGKLPKEEKISIMRFANRVPLLYQQGGCVTTHAVEDIKWKQYGLNQPGGGVPVGPAILLIHVASINVPFTSESKDAIADIPVIKDEIDLAIKDVARKLKHYLSKQSNLKKRREKEIIITKVLPKMAVKVANILEKDVPDINPVVAKIMGNLLVHRKVKRNEDGTADVVIKVKNFGTSAYAFKVHEMLPCTILGAKPEPKVVTLGNDYDYVWDISAAAGSSKVLSYRIESTTDKELGTFPDLVVEGLEEELVTGAKAFKGV.

ATP-binding positions include Asn-48, Asp-80, 101-102 (SR), 111-118 (GQQGIGIS), and Lys-435.

Belongs to the TOP6B family. Homodimer. Heterotetramer of two Top6A and two Top6B chains.

The catalysed reaction is ATP-dependent breakage, passage and rejoining of double-stranded DNA.. Its function is as follows. Relaxes both positive and negative superturns and exhibits a strong decatenase activity. This Methanosarcina barkeri (strain Fusaro / DSM 804) protein is Type 2 DNA topoisomerase 6 subunit B.